The sequence spans 78 residues: MALIRKTFYFLFAVFFVLVQLPSECQAGLDFSQPFPSDEFAVCESCKLGRGKCRKECLENEKPDGNCRLNFLCCRERI.

Positions 1–27 are cleaved as a signal peptide; sequence MALIRKTFYFLFAVFFVLVQLPSECQA. Cystine bridges form between Cys-43-Cys-74, Cys-53-Cys-67, and Cys-57-Cys-73.

It belongs to the beta-defensin family.

The protein localises to the secreted. Has antimicrobial activity. The chain is Beta-defensin 105A (DEFB105A) from Pongo pygmaeus (Bornean orangutan).